The following is a 201-amino-acid chain: Recombination protein RecR (201 aa).

The C4-type zinc-finger motif lies at 57–72; it reads CRYCRNLSDAEVCLLC. The region spanning 80–175 is the Toprim domain; the sequence is QQICVVETPA…QATRLAYGVP (96 aa).

The protein belongs to the RecR family.

In terms of biological role, may play a role in DNA repair. It seems to be involved in an RecBC-independent recombinational process of DNA repair. It may act with RecF and RecO. This chain is Recombination protein RecR, found in Dichelobacter nodosus (strain VCS1703A).